The following is a 167-amino-acid chain: Golgin subfamily A member 7B (167 aa).

2 S-palmitoyl cysteine lipidation sites follow: Cys-78 and Cys-81. The tract at residues 140–167 (RCSSGSSSSGSSSGSGSSSAGGGGAGAR) is disordered. The segment covering 142–157 (SSGSSSSGSSSGSGSS) has biased composition (low complexity). Residues 158 to 167 (SAGGGGAGAR) show a composition bias toward gly residues.

Belongs to the ERF4 family. Post-translationally, palmitoylated by ZDHHC5. Palmitoylation is required for the maintenance of ZDHHC5 at the plasma membrane.

It is found in the cell membrane. The protein resides in the golgi apparatus membrane. Functionally, play a role in cell adhesion by regulating the plasma membrane localization of the palmitoyltransferase ZDHHC5. May be involved in protein transport from Golgi to cell surface. The sequence is that of Golgin subfamily A member 7B (GOLGA7B) from Mus musculus (Mouse).